The primary structure comprises 461 residues: tRNA modification GTPase MnmE (461 aa).

(6S)-5-formyl-5,6,7,8-tetrahydrofolate contacts are provided by Arg-23, Glu-88, and Arg-127. A TrmE-type G domain is found at 223–383 (GLNTVIVGKP…LKECIKNLFF (161 aa)). Residue Asn-233 coordinates K(+). GTP contacts are provided by residues 233–238 (NVGKSS), 252–258 (TEIPGTT), and 277–280 (DTAG). A Mg(2+)-binding site is contributed by Ser-237. Residues Thr-252, Ile-254, and Thr-257 each contribute to the K(+) site. Thr-258 contributes to the Mg(2+) binding site. Residue Lys-461 participates in (6S)-5-formyl-5,6,7,8-tetrahydrofolate binding.

Belongs to the TRAFAC class TrmE-Era-EngA-EngB-Septin-like GTPase superfamily. TrmE GTPase family. As to quaternary structure, homodimer. Heterotetramer of two MnmE and two MnmG subunits. Requires K(+) as cofactor.

The protein resides in the cytoplasm. In terms of biological role, exhibits a very high intrinsic GTPase hydrolysis rate. Involved in the addition of a carboxymethylaminomethyl (cmnm) group at the wobble position (U34) of certain tRNAs, forming tRNA-cmnm(5)s(2)U34. This is tRNA modification GTPase MnmE from Clostridium botulinum (strain Okra / Type B1).